The following is a 421-amino-acid chain: Serine/threonine-protein kinase OXI1 (421 aa).

The Protein kinase domain maps to 17-329; the sequence is LEVLSLLGRG…VEEIKGHDFF (313 aa). Residues 23–31 and Lys-45 each bind ATP; that span reads LGRGAKGVV. Asp-149 functions as the Proton acceptor in the catalytic mechanism. The tract at residues 167–246 is activation loop; sequence DFDLSTNLAP…VGTEEYVAPE (80 aa). Ser-235 is modified (phosphoserine; by PDPK1). Residues 330-421 form the AGC-kinase C-terminal domain; that stretch reads RGVDWEKVIL…LESDNNFLVF (92 aa). The PIF motif lies at 418–421; it reads FLVF.

It belongs to the protein kinase superfamily. AGC Ser/Thr protein kinase family. Interacts with PDK1 and PDK2. In terms of tissue distribution, expressed in roots and root hair cells.

The enzyme catalyses L-seryl-[protein] + ATP = O-phospho-L-seryl-[protein] + ADP + H(+). The catalysed reaction is L-threonyl-[protein] + ATP = O-phospho-L-threonyl-[protein] + ADP + H(+). With respect to regulation, activated in response to hydrogen peroxide and cellulase elicitor. Activated by PDK1 in a phosphatidic acid dependent manner. In terms of biological role, involved in oxidative burst-mediated signaling. Required for basal resistance to P.parasitica infection and root hair growth. Partly required for the activation of MPK3 and MPK6 by hydrogen peroxide and cellulase elicitor. In Arabidopsis thaliana (Mouse-ear cress), this protein is Serine/threonine-protein kinase OXI1.